The sequence spans 100 residues: Small ribosomal subunit protein uS14c (100 aa).

The protein belongs to the universal ribosomal protein uS14 family. In terms of assembly, part of the 30S ribosomal subunit.

It is found in the plastid. The protein resides in the chloroplast. Its function is as follows. Binds 16S rRNA, required for the assembly of 30S particles. The polypeptide is Small ribosomal subunit protein uS14c (Barbarea verna (Land cress)).